A 126-amino-acid chain; its full sequence is Fluoride-specific ion channel FluC (126 aa).

4 consecutive transmembrane segments (helical) span residues 4-24 (PLLS…FLGL), 33-53 (IPLG…FAMA), 67-87 (FVIT…IEIV), and 97-117 (MAML…CLGL). Na(+)-binding residues include Gly74 and Thr77.

Belongs to the fluoride channel Fluc/FEX (TC 1.A.43) family.

It localises to the cell inner membrane. The enzyme catalyses fluoride(in) = fluoride(out). With respect to regulation, na(+) is not transported, but it plays an essential structural role and its presence is essential for fluoride channel function. Fluoride-specific ion channel. Important for reducing fluoride concentration in the cell, thus reducing its toxicity. The protein is Fluoride-specific ion channel FluC of Acinetobacter baumannii (strain SDF).